A 343-amino-acid polypeptide reads, in one-letter code: Ubiquitin thioesterase OTU1 (343 aa).

The segment at 45–123 (RCKAKGGTHV…IVEEDQTRPK (79 aa)) is UBX-like. The region spanning 144–269 (LTRTAVPADN…GIHYDPLQRN (126 aa)) is the OTU domain. The segment at 149–155 (VPADNSC) is cys-loop. Residue Asp152 is part of the active site. The active-site Nucleophile is Cys155. Residues 208 to 218 (IRRDDTWGGAI) are variable-loop. The tract at residues 258-262 (YDGIH) is his-loop. Substrate is bound at residue Ile261. His262 is a catalytic residue. An S2 site region spans residues 286–291 (DIVLVQ). The C2H2-type zinc-finger motif lies at 313–337 (LRCMLCQKGLTGQAEARDHARETGH). His337 is a catalytic residue.

In terms of assembly, interacts with VCP; the interaction is direct. Interacts with FAF2/UBXD8. Interacts with DERL1; however interaction is dependent on the UBAX-like region, suggesting that it may be indirect. Interacts with PLAA, UBXN6 and VCP; may form a complex involved in macroautophagy.

The protein resides in the cytoplasm. The enzyme catalyses Thiol-dependent hydrolysis of ester, thioester, amide, peptide and isopeptide bonds formed by the C-terminal Gly of ubiquitin (a 76-residue protein attached to proteins as an intracellular targeting signal).. Functionally, hydrolase that can remove conjugated ubiquitin from proteins and participates in endoplasmic reticulum-associated degradation (ERAD) for misfolded lumenal proteins. May act by triming the ubiquitin chain on the associated substrate to facilitate their threading through the VCP/p97 pore. Ubiquitin moieties on substrates may present a steric impediment to the threading process when the substrate is transferred to the VCP pore and threaded through VCP's axial channel. Mediates deubiquitination of 'Lys-27'-, 'Lys-29'- and 'Lys-33'-linked polyubiquitin chains. Also able to hydrolyze 'Lys-11'-linked ubiquitin chains. Cleaves both polyubiquitin and di-ubiquitin. May play a role in macroautophagy, regulating for instance the clearance of damaged lysosomes. May recruit PLAA, UBXN6 and VCP to damaged lysosome membranes decorated with K48-linked ubiquitin chains and remove these chains allowing autophagosome formation. In Rattus norvegicus (Rat), this protein is Ubiquitin thioesterase OTU1 (Yod1).